The following is a 138-amino-acid chain: Large ribosomal subunit protein uL16 (138 aa).

Residues 1 to 29 form a disordered region; the sequence is MSLLQPRKVKWRKPQKGRTKGKATRRNQV. Over residues 7 to 25 the composition is skewed to basic residues; the sequence is RKVKWRKPQKGRTKGKATR.

Belongs to the universal ribosomal protein uL16 family. In terms of assembly, part of the 50S ribosomal subunit.

Its function is as follows. Binds 23S rRNA and is also seen to make contacts with the A and possibly P site tRNAs. The polypeptide is Large ribosomal subunit protein uL16 (Sulfurihydrogenibium sp. (strain YO3AOP1)).